A 173-amino-acid polypeptide reads, in one-letter code: Alpha-crystallin A chain (173 aa).

Methionine 1 bears the N-acetylmethionine mark. Residues 1 to 63 form a required for complex formation with BFSP1 and BFSP2 region; it reads MDIAIQHPWF…RTVLDSGISE (63 aa). At glutamine 6 the chain carries Deamidated glutamine; partial. Serine 45 bears the Phosphoserine mark. Glutamine 50 is subject to Deamidated glutamine; partial. A sHSP domain is found at 52 to 162; the sequence is LFRTVLDSGI…GHSERAIPVS (111 aa). Residue lysine 70 is modified to N6-acetyllysine. At glutamine 90 the chain carries Deamidated glutamine; partial. N6-acetyllysine is present on lysine 99. Histidine 100 lines the Zn(2+) pocket. The residue at position 101 (asparagine 101) is a Deamidated asparagine; partial. The Zn(2+) site is built by glutamate 102 and histidine 107. Position 122 is a phosphoserine (serine 122). At asparagine 123 the chain carries Deamidated asparagine; partial. Residues 144–173 form a disordered region; that stretch reads PKVPSGLDAGHSERAIPVSREEKPSSAPSS. Over residues 153-167 the composition is skewed to basic and acidic residues; it reads GHSERAIPVSREEKP. Position 154 (histidine 154) interacts with Zn(2+). Serine 162 carries O-linked (GlcNAc) serine glycosylation.

It belongs to the small heat shock protein (HSP20) family. Heteromer composed of three CRYAA and one CRYAB subunits. Inter-subunit bridging via zinc ions enhances stability, which is crucial as there is no protein turn over in the lens. Can also form homodimers and homotetramers (dimers of dimers) which serve as the building blocks of homooligomers. Within homooligomers, the zinc-binding motif is created from residues of 3 different molecules. His-100 and Glu-102 from one molecule are ligands of the zinc ion, and His-107 and His-154 residues from additional molecules complete the site with tetrahedral coordination geometry. Part of a complex required for lens intermediate filament formation composed of BFSP1, BFSP2 and CRYAA. Acetylation at Lys-70 may increase chaperone activity. In terms of processing, undergoes age-dependent proteolytical cleavage at the C-terminus.

It localises to the cytoplasm. It is found in the nucleus. Its function is as follows. Contributes to the transparency and refractive index of the lens. Acts as a chaperone, preventing aggregation of various proteins under a wide range of stress conditions. Required for the correct formation of lens intermediate filaments as part of a complex composed of BFSP1, BFSP2 and CRYAA. This chain is Alpha-crystallin A chain (CRYAA), found in Tapirus indicus (Asiatic tapir).